The sequence spans 255 residues: Imidazole glycerol phosphate synthase subunit HisF (255 aa).

Active-site residues include aspartate 11 and aspartate 130.

This sequence belongs to the HisA/HisF family. In terms of assembly, heterodimer of HisH and HisF.

The protein resides in the cytoplasm. The enzyme catalyses 5-[(5-phospho-1-deoxy-D-ribulos-1-ylimino)methylamino]-1-(5-phospho-beta-D-ribosyl)imidazole-4-carboxamide + L-glutamine = D-erythro-1-(imidazol-4-yl)glycerol 3-phosphate + 5-amino-1-(5-phospho-beta-D-ribosyl)imidazole-4-carboxamide + L-glutamate + H(+). The protein operates within amino-acid biosynthesis; L-histidine biosynthesis; L-histidine from 5-phospho-alpha-D-ribose 1-diphosphate: step 5/9. Functionally, IGPS catalyzes the conversion of PRFAR and glutamine to IGP, AICAR and glutamate. The HisF subunit catalyzes the cyclization activity that produces IGP and AICAR from PRFAR using the ammonia provided by the HisH subunit. The chain is Imidazole glycerol phosphate synthase subunit HisF from Akkermansia muciniphila (strain ATCC BAA-835 / DSM 22959 / JCM 33894 / BCRC 81048 / CCUG 64013 / CIP 107961 / Muc).